Here is a 312-residue protein sequence, read N- to C-terminus: Ribosomal protein L11 methyltransferase (312 aa).

4 residues coordinate S-adenosyl-L-methionine: Thr-160, Gly-181, Asp-203, and Asn-246.

The protein belongs to the methyltransferase superfamily. PrmA family.

It localises to the cytoplasm. It carries out the reaction L-lysyl-[protein] + 3 S-adenosyl-L-methionine = N(6),N(6),N(6)-trimethyl-L-lysyl-[protein] + 3 S-adenosyl-L-homocysteine + 3 H(+). In terms of biological role, methylates ribosomal protein L11. This Staphylococcus haemolyticus (strain JCSC1435) protein is Ribosomal protein L11 methyltransferase.